The primary structure comprises 238 residues: MTIQAKPSSSISYDSTTYGTAPGLDIKEFQIIEDWNGRPASAWSVQRIGLLQSKIERYTYNIYHNNKYGKHNLSKLIPGHALIQFANETFGYDGWRMDVIDVEARECQPFTAVNNGENTNTSEVKYTVVAEAQVKVTLKDGTNTQCGGLGRITLSSRGECYNRSKKEAVGDALKKALLSFEKIILDYETKITNNYYVDGLYGSKKIKNEANTNYNLLSATNSKPTFIKLEDAKGTHIK.

This sequence belongs to the RAD52 family. Interacts with RAD51 and RAD52.

It is found in the nucleus. In terms of biological role, involved in the repair of double-strand breaks in DNA during vegetative growth via recombination and single-strand annealing. Anneals complementary single-stranded DNA. The protein is DNA repair protein RAD59 (RAD59) of Saccharomyces cerevisiae (strain ATCC 204508 / S288c) (Baker's yeast).